Here is a 156-residue protein sequence, read N- to C-terminus: ATP synthase subunit b (156 aa).

Residues 11–31 (AIAFILFVWFCMKYVWPPLMA) form a helical membrane-spanning segment.

It belongs to the ATPase B chain family. In terms of assembly, F-type ATPases have 2 components, F(1) - the catalytic core - and F(0) - the membrane proton channel. F(1) has five subunits: alpha(3), beta(3), gamma(1), delta(1), epsilon(1). F(0) has three main subunits: a(1), b(2) and c(10-14). The alpha and beta chains form an alternating ring which encloses part of the gamma chain. F(1) is attached to F(0) by a central stalk formed by the gamma and epsilon chains, while a peripheral stalk is formed by the delta and b chains.

It localises to the cell inner membrane. Its function is as follows. F(1)F(0) ATP synthase produces ATP from ADP in the presence of a proton or sodium gradient. F-type ATPases consist of two structural domains, F(1) containing the extramembraneous catalytic core and F(0) containing the membrane proton channel, linked together by a central stalk and a peripheral stalk. During catalysis, ATP synthesis in the catalytic domain of F(1) is coupled via a rotary mechanism of the central stalk subunits to proton translocation. In terms of biological role, component of the F(0) channel, it forms part of the peripheral stalk, linking F(1) to F(0). This is ATP synthase subunit b from Salmonella agona (strain SL483).